Here is a 694-residue protein sequence, read N- to C-terminus: Follicle-stimulating hormone receptor (694 aa).

A signal peptide spans 1 to 17 (MAFLWISFLVFLGSGSG). Disulfide bonds link C18–C25 and C23–C32. The 29-residue stretch at 18 to 46 (CHHRICHCSDRVFICQESKVTEIPSDIPR) folds into the LRRNT domain. Over 18–367 (CHHRICHCSD…EDIMGYNFLR (350 aa)) the chain is Extracellular. 9 LRR repeats span residues 49 to 72 (VEMR…FRDL), 73 to 97 (EKIE…LPKL), 98 to 118 (HEIR…AFWN), 119 to 143 (LPNL…KIQS), 144 to 169 (HQKV…AGLS), 170 to 192 (SESE…AFNG), 193 to 216 (TQLD…IFQG), 217 to 240 (ANGP…GLKN), and 241 to 259 (LKKL…PNLD). N-linked (GlcNAc...) asparagine glycans are attached at residues N191 and N199. N-linked (GlcNAc...) asparagine glycosylation occurs at N268. Intrachain disulfides connect C275-C347, C276-C292, C276-C357, and C292-C339. N293 carries an N-linked (GlcNAc...) asparagine glycan. A Sulfotyrosine modification is found at Y336. The chain crosses the membrane as a helical span at residues 368–388 (VLIWFISILSITGNIVVLVIL). Over 389–399 (ITSQYKLTVPR) the chain is Cytoplasmic. Residues 400–422 (FLMCNLAFADLCIGIYLLLIASV) traverse the membrane as a helical segment. The Extracellular portion of the chain corresponds to 423 to 444 (DIHTKSQYHNYAIDWQTGAGCD). Residues C443 and C518 are joined by a disulfide bond. Residues 445–466 (AAGFFTVFASELSVYTLTAITL) form a helical membrane-spanning segment. The Cytoplasmic portion of the chain corresponds to 467–486 (ERWHTITYAMQLDRKVRLRH). Residues 487–509 (AASIMLIGWIFAFSVALLPIFGV) form a helical membrane-spanning segment. The Extracellular portion of the chain corresponds to 510 to 529 (SSYMKVSICLPMDIDSPLSQ). The chain crosses the membrane as a helical span at residues 530–551 (FYVISLLVLNVLASVIICTCYT). Residues 552–574 (HIYFTVRNPNIISSTSDAKIAKR) are Cytoplasmic-facing. Residues 575 to 598 (MAMLIFTDFLCMAPISFFAISASV) traverse the membrane as a helical segment. At 599 to 609 (KMPLITVSKSK) the chain is on the extracellular side. Residues 610-631 (ILLVLFYPINSCANPFLYAVFT) form a helical membrane-spanning segment. At 632–694 (KTFRRDFFIL…YKLVPLNHLS (63 aa)) the chain is on the cytoplasmic side.

It belongs to the G-protein coupled receptor 1 family. FSH/LSH/TSH subfamily. In terms of assembly, homotrimer. Functions as a homotrimer binding the FSH hormone heterodimer composed of CGA and FSHB. Interacts with ARRB2. Interacts with APPL2; interaction is independent of follicle stimulating hormone stimulation. Post-translationally, N-glycosylated; indirectly required for FSH-binding, possibly via a conformational change that allows high affinity binding of hormone. In terms of processing, sulfated.

The protein resides in the cell membrane. Functionally, g protein-coupled receptor for follitropin, the follicle-stimulating hormone. Through cAMP production activates the downstream PI3K-AKT and ERK1/ERK2 signaling pathways. The protein is Follicle-stimulating hormone receptor (FSHR) of Notamacropus eugenii (Tammar wallaby).